The chain runs to 218 residues: uncharacterized protein (218 aa).

His-57, His-59, Asp-61, His-62, His-138, Asp-158, and His-199 together coordinate Zn(2+).

It belongs to the metallo-beta-lactamase superfamily. Glyoxalase II family. Zn(2+) serves as cofactor.

This is an uncharacterized protein from Mycobacterium leprae (strain TN).